The chain runs to 70 residues: Protein SlyX homolog (70 aa).

The protein belongs to the SlyX family.

This Pseudoalteromonas atlantica (strain T6c / ATCC BAA-1087) protein is Protein SlyX homolog.